A 122-amino-acid chain; its full sequence is Basic phospholipase A2 homolog (122 aa).

Cystine bridges form between Cys-26/Cys-115, Cys-28/Cys-44, Cys-43/Cys-95, Cys-49/Cys-122, Cys-50/Cys-88, Cys-57/Cys-81, and Cys-75/Cys-86. The interval 105–117 (KRYMTYPNILCSS) is important for membrane-damaging activities in eukaryotes and bacteria; heparin-binding.

The protein belongs to the phospholipase A2 family. Group II subfamily. N49 sub-subfamily. As to expression, expressed by the venom gland.

It is found in the secreted. The sequence is that of Basic phospholipase A2 homolog from Gloydius halys (Chinese water mocassin).